The following is a 554-amino-acid chain: Hydroxylamine reductase (554 aa).

Cys3, Cys6, Cys18, and Cys25 together coordinate [2Fe-2S] cluster. Hybrid [4Fe-2O-2S] cluster is bound by residues His252, Glu276, Cys320, Cys408, Cys436, Cys461, Glu495, and Lys497. A Cysteine persulfide modification is found at Cys408.

This sequence belongs to the HCP family. Requires [2Fe-2S] cluster as cofactor. Hybrid [4Fe-2O-2S] cluster is required as a cofactor.

It is found in the cytoplasm. The catalysed reaction is A + NH4(+) + H2O = hydroxylamine + AH2 + H(+). Catalyzes the reduction of hydroxylamine to form NH(3) and H(2)O. The chain is Hydroxylamine reductase from Shewanella baltica (strain OS195).